Consider the following 389-residue polypeptide: Vacuolar protein sorting-associated protein vts1 (389 aa).

Positions 149–335 (NPQRKAKTPS…RPSQPTKASP (187 aa)) are disordered. Composition is skewed to polar residues over residues 156-177 (TPSNHATEELQQSSTNSTTLPT), 184-219 (TNASASHETSFALPTTSPAASLSISPTKSAAVSSEP), and 227-282 (SLSS…PESK). Positions 294–306 (TSITTTSTSIDPS) are enriched in low complexity. Residues 308–334 (AFSSKSTLATTRTNAPLSRPSQPTKAS) show a composition bias toward polar residues.

Belongs to the VTA1 family. Homodimer (in cytoplasm).

The protein localises to the cytoplasm. It is found in the endosome membrane. Its function is as follows. Has a role in the formation of the multivesicular body (MVB). Required for the sorting of lipids to form intralumenal vesicles and for fluid-phase transport to the vacuole. Required for sorting several plasma membrane proteins into the MVB. This Schizosaccharomyces pombe (strain 972 / ATCC 24843) (Fission yeast) protein is Vacuolar protein sorting-associated protein vts1 (vts1).